The primary structure comprises 459 residues: Cysteine--tRNA ligase (459 aa).

Zn(2+) is bound at residue cysteine 29. Positions 31 to 41 (PTVYNLVHIGN) match the 'HIGH' region motif. Zn(2+) contacts are provided by cysteine 209, histidine 234, and glutamate 238. The 'KMSKS' region motif lies at 267-271 (KMSKS). ATP is bound at residue lysine 270.

It belongs to the class-I aminoacyl-tRNA synthetase family. In terms of assembly, monomer. Requires Zn(2+) as cofactor.

The protein localises to the cytoplasm. The catalysed reaction is tRNA(Cys) + L-cysteine + ATP = L-cysteinyl-tRNA(Cys) + AMP + diphosphate. This Saccharophagus degradans (strain 2-40 / ATCC 43961 / DSM 17024) protein is Cysteine--tRNA ligase.